The sequence spans 228 residues: Urease accessory protein UreF (228 aa).

It belongs to the UreF family. UreD, UreF and UreG form a complex that acts as a GTP-hydrolysis-dependent molecular chaperone, activating the urease apoprotein by helping to assemble the nickel containing metallocenter of UreC. The UreE protein probably delivers the nickel.

It localises to the cytoplasm. In terms of biological role, required for maturation of urease via the functional incorporation of the urease nickel metallocenter. This Yersinia enterocolitica serotype O:8 / biotype 1B (strain NCTC 13174 / 8081) protein is Urease accessory protein UreF.